Consider the following 160-residue polypeptide: Cyclic pyranopterin monophosphate synthase (160 aa).

Residues 75-77 and 113-114 each bind substrate; these read LCH and ME. Aspartate 128 is a catalytic residue.

It belongs to the MoaC family. In terms of assembly, homohexamer; trimer of dimers.

It carries out the reaction (8S)-3',8-cyclo-7,8-dihydroguanosine 5'-triphosphate = cyclic pyranopterin phosphate + diphosphate. It participates in cofactor biosynthesis; molybdopterin biosynthesis. Catalyzes the conversion of (8S)-3',8-cyclo-7,8-dihydroguanosine 5'-triphosphate to cyclic pyranopterin monophosphate (cPMP). The protein is Cyclic pyranopterin monophosphate synthase of Sodalis glossinidius (strain morsitans).